Consider the following 570-residue polypeptide: Methionine--tRNA ligase (570 aa).

The short motif at 11–21 (PYVQTVPHLGN) is the 'HIGH' region element. Zn(2+) contacts are provided by Cys143, Cys146, Cys156, and Cys159. The short motif at 333-337 (KFSKS) is the 'KMSKS' region element. Lys336 contributes to the ATP binding site.

Belongs to the class-I aminoacyl-tRNA synthetase family. MetG type 1 subfamily. It depends on Zn(2+) as a cofactor.

Its subcellular location is the cytoplasm. It carries out the reaction tRNA(Met) + L-methionine + ATP = L-methionyl-tRNA(Met) + AMP + diphosphate. Functionally, is required not only for elongation of protein synthesis but also for the initiation of all mRNA translation through initiator tRNA(fMet) aminoacylation. This chain is Methionine--tRNA ligase, found in Pyrobaculum arsenaticum (strain DSM 13514 / JCM 11321 / PZ6).